The sequence spans 430 residues: Putative ABC transporter periplasmic-binding protein YcjN (430 aa).

An N-terminal signal peptide occupies residues 1–19; it reads MIKSKIVLLSALVSCALIS.

The protein belongs to the bacterial solute-binding protein 1 family.

Its subcellular location is the periplasm. Functionally, probably part of the binding-protein-dependent transport system YcjNOP. The sequence is that of Putative ABC transporter periplasmic-binding protein YcjN (ycjN) from Escherichia coli (strain K12).